A 58-amino-acid chain; its full sequence is Small ribosomal subunit protein bS21 (58 aa).

Positions 32–42 (IRKREHYEKPS) are enriched in basic and acidic residues. The interval 32–58 (IRKREHYEKPSVRRKKKSEAARKRKFN) is disordered. Residues 43–58 (VRRKKKSEAARKRKFN) show a composition bias toward basic residues.

Belongs to the bacterial ribosomal protein bS21 family.

The polypeptide is Small ribosomal subunit protein bS21 (Lachnospira eligens (strain ATCC 27750 / DSM 3376 / VPI C15-48 / C15-B4) (Eubacterium eligens)).